We begin with the raw amino-acid sequence, 193 residues long: Mediator of RNA polymerase II transcription subunit 11 (193 aa).

A coiled-coil region spans residues 31–68; it reads AREIMQDLGKEKQISKNKMDDNANSFKKLITQVENELS. Positions 115–193 are disordered; that stretch reads IEPPTQEVDE…EEEEGEQMEN (79 aa). Residues 121–143 are compositionally biased toward acidic residues; sequence EVDEDNEDEEDSGDADMLEETPE. Residues 150-175 are compositionally biased toward low complexity; the sequence is TTSSSATTSDGGSGGADDAASSSAPR. Positions 184 to 193 are enriched in acidic residues; the sequence is EEEEGEQMEN.

Belongs to the Mediator complex subunit 11 family. Component of the Mediator complex.

It localises to the nucleus. Functionally, component of the Mediator complex, a coactivator involved in the regulated transcription of nearly all RNA polymerase II-dependent genes. Mediator functions as a bridge to convey information from gene-specific regulatory proteins to the basal RNA polymerase II transcription machinery. Mediator is recruited to promoters by direct interactions with regulatory proteins and serves as a scaffold for the assembly of a functional pre-initiation complex with RNA polymerase II and the general transcription factors. The polypeptide is Mediator of RNA polymerase II transcription subunit 11 (mdt-11) (Caenorhabditis briggsae).